The following is a 502-amino-acid chain: Probable cytosol aminopeptidase (502 aa).

Mn(2+) contacts are provided by Lys269 and Asp274. Lys281 is an active-site residue. Mn(2+) contacts are provided by Asp292, Asp351, and Glu353. Arg355 is a catalytic residue.

Belongs to the peptidase M17 family. Mn(2+) is required as a cofactor.

The protein localises to the cytoplasm. The catalysed reaction is Release of an N-terminal amino acid, Xaa-|-Yaa-, in which Xaa is preferably Leu, but may be other amino acids including Pro although not Arg or Lys, and Yaa may be Pro. Amino acid amides and methyl esters are also readily hydrolyzed, but rates on arylamides are exceedingly low.. It carries out the reaction Release of an N-terminal amino acid, preferentially leucine, but not glutamic or aspartic acids.. Functionally, presumably involved in the processing and regular turnover of intracellular proteins. Catalyzes the removal of unsubstituted N-terminal amino acids from various peptides. The sequence is that of Probable cytosol aminopeptidase from Shewanella sediminis (strain HAW-EB3).